The chain runs to 271 residues: Transmembrane protein 150A (271 aa).

Residues 1-2 (MT) are Cytoplasmic-facing. Residues 3-23 (AWILLPVSLSAFSITGIWTVY) traverse the membrane as a helical segment. Residues 24–75 (AMAVMNHHVCPVENWSYNESCPPDPAEQGGPKTCCTLDDVPLISKCGSYPPE) lie on the Extracellular side of the membrane. Residues N37 and N41 are each glycosylated (N-linked (GlcNAc...) asparagine). Residues 76–96 (SCLFSLIGNMGAFMVALICLL) traverse the membrane as a helical segment. The Cytoplasmic segment spans residues 97 to 108 (RYGQLLEQSRHS). The chain crosses the membrane as a helical span at residues 109 to 129 (WVNTTALITGCTNAAGLLVVG). Over 130–140 (NFQVDHARSLH) the chain is Extracellular. Residues 141–161 (YVGAGVAFPAGLLFVCLHCAL) traverse the membrane as a helical segment. Over 162–178 (SYQGATAPLDLAVAYLR) the chain is Cytoplasmic. The chain crosses the membrane as a helical span at residues 179–199 (SVLAVIAFITLVLSGVFFVHE). Over 200 to 211 (SSQLQHGAALCE) the chain is Extracellular. Residues 212–232 (WVCVIDILIFYGTFSYEFGAV) traverse the membrane as a helical segment. Residues 233–271 (SSDTLVAALQPTPGRACKSSGSSSTSTHLNCAPESIAMI) are Cytoplasmic-facing.

The protein belongs to the DRAM/TMEM150 family. In terms of assembly, interacts (via C-terminal cytoplasmic tail) with PI4KA.

The protein resides in the cell membrane. Regulates localization of phosphatidylinositol 4-kinase (PI4K) to the plasma membrane, possibly by reducing the association of TTC7 (TTC7A or TTC7B) with the PI4K complex. Acts as a regulator of phosphatidylinositol 4-phosphate (PtdIns(4)P) synthesis. May also play a role in fasting-induced catabolism. The chain is Transmembrane protein 150A (TMEM150A) from Homo sapiens (Human).